Here is a 156-residue protein sequence, read N- to C-terminus: Protein-export protein SecB (156 aa).

The protein belongs to the SecB family. Homotetramer, a dimer of dimers. One homotetramer interacts with 1 SecA dimer.

The protein resides in the cytoplasm. In terms of biological role, one of the proteins required for the normal export of preproteins out of the cell cytoplasm. It is a molecular chaperone that binds to a subset of precursor proteins, maintaining them in a translocation-competent state. It also specifically binds to its receptor SecA. This chain is Protein-export protein SecB, found in Xanthobacter autotrophicus (strain ATCC BAA-1158 / Py2).